A 181-amino-acid chain; its full sequence is UPF0397 protein SUB0313 (181 aa).

Helical transmembrane passes span 11 to 31 (AIGIGAALFVIIGLFVPITIF), 45 to 65 (LFSVLFGPVAGFFIGFIGHML), 69 to 89 (FAGYGVWWSWVLPSGLVGLGI), 114 to 134 (VQALVNLISWAIVAPLGDILI), and 147 to 167 (LFAAFANTFTIGIGGTLLLIA).

The protein belongs to the UPF0397 family.

It is found in the cell membrane. The polypeptide is UPF0397 protein SUB0313 (Streptococcus uberis (strain ATCC BAA-854 / 0140J)).